The chain runs to 421 residues: 5-methylthioadenosine/S-adenosylhomocysteine deaminase (421 aa).

2 residues coordinate Zn(2+): His-60 and His-62. Residues Glu-89 and His-181 each contribute to the substrate site. Residue His-208 participates in Zn(2+) binding. Glu-211 and Asp-296 together coordinate substrate. Residue Asp-296 participates in Zn(2+) binding.

This sequence belongs to the metallo-dependent hydrolases superfamily. MTA/SAH deaminase family. Zn(2+) serves as cofactor.

It carries out the reaction S-adenosyl-L-homocysteine + H2O + H(+) = S-inosyl-L-homocysteine + NH4(+). The enzyme catalyses S-methyl-5'-thioadenosine + H2O + H(+) = S-methyl-5'-thioinosine + NH4(+). In terms of biological role, catalyzes the deamination of 5-methylthioadenosine and S-adenosyl-L-homocysteine into 5-methylthioinosine and S-inosyl-L-homocysteine, respectively. Is also able to deaminate adenosine. This chain is 5-methylthioadenosine/S-adenosylhomocysteine deaminase, found in Pyrococcus horikoshii (strain ATCC 700860 / DSM 12428 / JCM 9974 / NBRC 100139 / OT-3).